A 282-amino-acid polypeptide reads, in one-letter code: Lipoyl synthase (282 aa).

Positions 37, 42, 48, 63, 67, 70, and 274 each coordinate [4Fe-4S] cluster. In terms of domain architecture, Radical SAM core spans 49-263 (WGKGTATFMI…KTIGLEKGFS (215 aa)).

This sequence belongs to the radical SAM superfamily. Lipoyl synthase family. The cofactor is [4Fe-4S] cluster.

The protein resides in the cytoplasm. The catalysed reaction is [[Fe-S] cluster scaffold protein carrying a second [4Fe-4S](2+) cluster] + N(6)-octanoyl-L-lysyl-[protein] + 2 oxidized [2Fe-2S]-[ferredoxin] + 2 S-adenosyl-L-methionine + 4 H(+) = [[Fe-S] cluster scaffold protein] + N(6)-[(R)-dihydrolipoyl]-L-lysyl-[protein] + 4 Fe(3+) + 2 hydrogen sulfide + 2 5'-deoxyadenosine + 2 L-methionine + 2 reduced [2Fe-2S]-[ferredoxin]. It functions in the pathway protein modification; protein lipoylation via endogenous pathway; protein N(6)-(lipoyl)lysine from octanoyl-[acyl-carrier-protein]: step 2/2. Catalyzes the radical-mediated insertion of two sulfur atoms into the C-6 and C-8 positions of the octanoyl moiety bound to the lipoyl domains of lipoate-dependent enzymes, thereby converting the octanoylated domains into lipoylated derivatives. This is Lipoyl synthase from Bacteroides thetaiotaomicron (strain ATCC 29148 / DSM 2079 / JCM 5827 / CCUG 10774 / NCTC 10582 / VPI-5482 / E50).